Here is a 327-residue protein sequence, read N- to C-terminus: Phenylalanine--tRNA ligase alpha subunit (327 aa).

A Mg(2+)-binding site is contributed by E252.

The protein belongs to the class-II aminoacyl-tRNA synthetase family. Phe-tRNA synthetase alpha subunit type 1 subfamily. Tetramer of two alpha and two beta subunits. Requires Mg(2+) as cofactor.

It localises to the cytoplasm. It carries out the reaction tRNA(Phe) + L-phenylalanine + ATP = L-phenylalanyl-tRNA(Phe) + AMP + diphosphate + H(+). In Erwinia tasmaniensis (strain DSM 17950 / CFBP 7177 / CIP 109463 / NCPPB 4357 / Et1/99), this protein is Phenylalanine--tRNA ligase alpha subunit.